The sequence spans 706 residues: Polyribonucleotide nucleotidyltransferase (706 aa).

Residues Asp-483 and Asp-489 each contribute to the Mg(2+) site. Residues 550-609 enclose the KH domain; the sequence is PRITTIWVKTDKIRDVIGTGGKNIRNITETTGVTVDIEDTGRINIASTSKEACDLAIQMI. The 69-residue stretch at 619-687 folds into the S1 motif domain; the sequence is GKLYMGIVKK…KNGKVKLSRK (69 aa).

Belongs to the polyribonucleotide nucleotidyltransferase family. Mg(2+) serves as cofactor.

Its subcellular location is the cytoplasm. The enzyme catalyses RNA(n+1) + phosphate = RNA(n) + a ribonucleoside 5'-diphosphate. Functionally, involved in mRNA degradation. Catalyzes the phosphorolysis of single-stranded polyribonucleotides processively in the 3'- to 5'-direction. The protein is Polyribonucleotide nucleotidyltransferase of Pelobacter propionicus (strain DSM 2379 / NBRC 103807 / OttBd1).